The chain runs to 254 residues: Transcription factor CAULIFLOWER (254 aa).

An MADS-box domain is found at 1–61; it reads MGRGRVEMKR…GKLFEYSSES (61 aa). Positions 90–180 constitute a K-box domain; sequence QTNWSMEYSR…TKQIKERESI (91 aa). The span at 182–191 shows a compositional bias: polar residues; sequence RTHQNQSEQQ. The disordered stretch occupies residues 182-205; the sequence is RTHQNQSEQQNRSHHVAPQPQPQL.

Homodimer capable of binding to CArG-box sequences.

The protein localises to the nucleus. Functionally, probable transcription factor that promotes early floral meristem identity in synergy with APETALA1, FRUITFULL and LEAFY. Is required subsequently for the transition of an inflorescence meristem into a floral meristem. Seems to be partially redundant to the function of APETALA1. The sequence is that of Transcription factor CAULIFLOWER (CAL) from Brassica rapa subsp. pekinensis (Chinese cabbage).